We begin with the raw amino-acid sequence, 878 residues long: uncharacterized protein (878 aa).

4 disordered regions span residues 58-223 (IGVD…RTKF), 306-494 (KGRL…TSSR), 585-652 (KLLE…SGKL), and 679-709 (PSSM…GGGG). Low complexity-rich tracts occupy residues 64-213 (NGNS…SGTS), 314-325 (SNSSQSSDSDYS), and 335-355 (IPNS…PNSN). The span at 362–372 (RNPNQLSSTNV) shows a compositional bias: polar residues. Low complexity predominate over residues 373–494 (NNNINNSGGS…TPTTPVTSSR (122 aa)). A compositionally biased stretch (basic and acidic residues) spans 585 to 595 (KLLEQQKEQQQ). Positions 596 to 605 (KEQQQQQKQQ) are enriched in low complexity. The span at 615-624 (TDDEDEDDDE) shows a compositional bias: acidic residues. Composition is skewed to low complexity over residues 639 to 652 (NLSN…SGKL) and 679 to 704 (PSSM…SSSS).

This is an uncharacterized protein from Dictyostelium discoideum (Social amoeba).